A 333-amino-acid polypeptide reads, in one-letter code: Polygalacturonase inhibitor (333 aa).

Positions 1-27 (METSKLFLLSSSLLLVLLATRPCPSLS) are cleaved as a signal peptide. 2 cysteine pairs are disulfide-bonded: Cys-30/Cys-60 and Cys-61/Cys-68. 10 LRR repeats span residues 72 to 96 (THRI…VGDL), 97 to 120 (PFLE…AIAK), 121 to 144 (LKHL…FFSE), 145 to 169 (LKNL…LSLL), 170 to 192 (PNLG…SFGK), 194 to 220 (AGST…GFDP), 221 to 240 (NVMD…FFNA), 241 to 263 (NKST…RVEF), 264 to 288 (PKSL…MTSL), and 290 to 312 (LQFL…KLQS). N-linked (GlcNAc...) asparagine glycosylation is found at Asn-109, Asn-133, Asn-147, and Asn-157. N-linked (GlcNAc...) asparagine glycosylation is present at Asn-241. Asn-294 carries an N-linked (GlcNAc...) asparagine glycan. 2 disulfides stabilise this stretch: Cys-301–Cys-323 and Cys-325–Cys-332.

The protein belongs to the polygalacturonase-inhibiting protein family.

The protein resides in the secreted. It localises to the cell wall. Its subcellular location is the membrane. Inhibitor of fungal polygalacturonase. It is an important factor for plant resistance to phytopathogenic fungi. The polypeptide is Polygalacturonase inhibitor (pgip) (Vitis vinifera (Grape)).